The chain runs to 227 residues: Cytochrome c oxidase subunit 2 (227 aa).

The Mitochondrial intermembrane segment spans residues 1–14 (MAHPMQLGFQDAAS). Residues 15–45 (PIMEELLYFHDHTLMIVFMISSLVLYIISLM) traverse the membrane as a helical segment. Residues 46-59 (LSTELTHTSTMDAQ) lie on the Mitochondrial matrix side of the membrane. The chain crosses the membrane as a helical span at residues 60–87 (EVETVWTILPAVILILIALPSLRILYMM). Topologically, residues 88 to 227 (DEINTPSMTL…YFEEWLLKSL (140 aa)) are mitochondrial intermembrane. Cu cation contacts are provided by H161, C196, E198, C200, H204, and M207. E198 lines the Mg(2+) pocket. Y218 bears the Phosphotyrosine mark.

It belongs to the cytochrome c oxidase subunit 2 family. In terms of assembly, component of the cytochrome c oxidase (complex IV, CIV), a multisubunit enzyme composed of 14 subunits. The complex is composed of a catalytic core of 3 subunits MT-CO1, MT-CO2 and MT-CO3, encoded in the mitochondrial DNA, and 11 supernumerary subunits COX4I, COX5A, COX5B, COX6A, COX6B, COX6C, COX7A, COX7B, COX7C, COX8 and NDUFA4, which are encoded in the nuclear genome. The complex exists as a monomer or a dimer and forms supercomplexes (SCs) in the inner mitochondrial membrane with NADH-ubiquinone oxidoreductase (complex I, CI) and ubiquinol-cytochrome c oxidoreductase (cytochrome b-c1 complex, complex III, CIII), resulting in different assemblies (supercomplex SCI(1)III(2)IV(1) and megacomplex MCI(2)III(2)IV(2)). Found in a complex with TMEM177, COA6, COX18, COX20, SCO1 and SCO2. Interacts with TMEM177 in a COX20-dependent manner. Interacts with COX20. Interacts with COX16. The cofactor is Cu cation.

The protein resides in the mitochondrion inner membrane. The enzyme catalyses 4 Fe(II)-[cytochrome c] + O2 + 8 H(+)(in) = 4 Fe(III)-[cytochrome c] + 2 H2O + 4 H(+)(out). Functionally, component of the cytochrome c oxidase, the last enzyme in the mitochondrial electron transport chain which drives oxidative phosphorylation. The respiratory chain contains 3 multisubunit complexes succinate dehydrogenase (complex II, CII), ubiquinol-cytochrome c oxidoreductase (cytochrome b-c1 complex, complex III, CIII) and cytochrome c oxidase (complex IV, CIV), that cooperate to transfer electrons derived from NADH and succinate to molecular oxygen, creating an electrochemical gradient over the inner membrane that drives transmembrane transport and the ATP synthase. Cytochrome c oxidase is the component of the respiratory chain that catalyzes the reduction of oxygen to water. Electrons originating from reduced cytochrome c in the intermembrane space (IMS) are transferred via the dinuclear copper A center (CU(A)) of subunit 2 and heme A of subunit 1 to the active site in subunit 1, a binuclear center (BNC) formed by heme A3 and copper B (CU(B)). The BNC reduces molecular oxygen to 2 water molecules using 4 electrons from cytochrome c in the IMS and 4 protons from the mitochondrial matrix. The sequence is that of Cytochrome c oxidase subunit 2 (MT-CO2) from Nycticebus coucang (Slow loris).